Consider the following 1166-residue polypeptide: Folliculin-interacting protein 1 (1166 aa).

One can recognise a uDENN FNIP1/2-type domain in the interval 37–478; it reads FDPSQIRLIV…TVMPNGQPPI (442 aa). Residues Ser220, Ser230, Ser232, and Ser261 each carry the phosphoserine; by AMPK modification. Position 294 is a phosphothreonine (Thr294). Ser296 carries the post-translational modification Phosphoserine. In terms of domain architecture, cDENN FNIP1/2-type spans 486-1092; the sequence is SSQSVDMLAK…VSNLLHSTLQ (607 aa). A Phosphoserine; by AMPK modification is found at Ser593. Residue Ser594 is modified to Phosphoserine. Residues Cys608 and Cys610 each contribute to the Zn(2+) site. The Cys degron signature appears at 608–615; sequence CNCKYCSH. Positions 611–612 are KY-finger; sequence KY. Residues Cys613 and His615 each coordinate Zn(2+). Phosphoserine is present on residues Ser760 and Ser763. Disordered regions lie at residues 781-817 and 912-956; these read TKPL…VSEE and LVPH…HDMT. Basic and acidic residues-rich tracts occupy residues 783–805 and 915–925; these read PLKE…KDQS and HGDKESSDKKI. Residues 929–1166 form an interaction with HSP90AA1 region; that stretch reads TEWDIPRNES…HSPYVAQILL (238 aa). A Phosphoserine; alternate; by CK2 modification is found at Ser938. Ser938 is a glycosylation site (O-linked (GlcNAc) serine; alternate). Phosphoserine; by CK2 is present on residues Ser939, Ser941, Ser946, and Ser948. In terms of domain architecture, dDENN FNIP1/2-type spans 1102-1157; it reads FCVMHLEDRLQELYFKSKMLSEYLRGQMRVHVKELGVVLGIESSDLPLLAAVASTH. Residue Lys1119 forms a Glycyl lysine isopeptide (Lys-Gly) (interchain with G-Cter in ubiquitin) linkage.

The protein belongs to the FNIP family. As to quaternary structure, homodimer and homomultimer. Heterodimer and heteromultimer with FNIP2. Interacts with FLCN (via C-terminus). Component of the lysosomal folliculin complex (LFC), composed of FLCN, FNIP1 (or FNIP2), RagA/RRAGA or RagB/RRAGB GDP-bound, RagC/RRAGC or RagD/RRAGD GTP-bound, and Ragulator. Interacts with HSPCA and with the PRKAA1, PRKAB1 and PRKAG1 subunits of 5'-AMP-activated protein kinase (AMPK). Phosphorylated FLCN and AMPK are preferentially bound. Interacts with HSP70, STIP1, PTGES3, CDC37, BRAF, GCR and CDK4. Interacts with HSP90AA1; the interaction inhibits HSP90AA1 ATPase activity. Interacts with ATP2A2. Phosphorylated by AMPK in response to energetic stress. Phosphorylation by AMPK in response to mitochondrial damage promotes inactivation of the non-canonical mTORC1 signaling, nuclear translocation of TFEB and TFE3, inducing transcription of lysosomal or autophagy genes. Sequential phosphorylation by CK2 promotes its gradual interaction with HSP90AA1/Hsp90. Priming phosphorylation at Ser-938 is followed by relay phosphorylation at Ser-939, Ser-941, Ser-946 and Ser-948, promoting its gradual interaction with HSP90AA1/Hsp90. This leads to incremental inhibition of HSP90AA1/Hsp90 ATPase activity and gradual activation of both kinase and non-kinase clients. Dephosphorylated by protein phosphatase 5 (PP5), promoting glycosylation by OGT. Post-translationally, glcNAcylation at Ser-938 by OGT following dephosphorylation by protein phosphatase 5 (PP5) promotes ubiquitination and degradation by the proteasome. In terms of processing, ubiquitinated through 'Lys-11' linkage of ubiquitin moieties at Lys-1119 following glycosylation by OGT, leading to its degradation by the proteasome. Ubiquitinated by the CRL2(FEM1B) complex in response to reductive stress: reductive stress causes reduction of the conserved Cys degron in FNIP1, followed by zinc-binding, zinc acting as a molecular glue for recognition by the CRL2(FEM1B) complex. Ubiquitination leads to FNIP1 degradation, and activation of mitochondria to recalibrate reactive oxygen species (ROS). Oxidation of the Cys degron in normal conditions promotes its stabilization by preventing recognition and ubiquitination by the CRL2(FEM1B) complex. In terms of tissue distribution, strong expression is found in the heart, liver placenta, muscle, nasal mucosa, salivary gland and uvula and moderate expression in kidney and lung. Higher levels detected in clear cell renal cell carcinoma (RCC) and chromophobe RCC than in normal kidney tissue. Expressed in peripheral blood mononuclear cells.

Its subcellular location is the lysosome membrane. It localises to the cytoplasm. The protein localises to the cytosol. Its function is as follows. Binding partner of the GTPase-activating protein FLCN: involved in the cellular response to amino acid availability by regulating the non-canonical mTORC1 signaling cascade controlling the MiT/TFE factors TFEB and TFE3. Required to promote FLCN recruitment to lysosomes and interaction with Rag GTPases, leading to activation of the non-canonical mTORC1 signaling. In low-amino acid conditions, component of the lysosomal folliculin complex (LFC) on the membrane of lysosomes, which inhibits the GTPase-activating activity of FLCN, thereby inactivating mTORC1 and promoting nuclear translocation of TFEB and TFE3. Upon amino acid restimulation, disassembly of the LFC complex liberates the GTPase-activating activity of FLCN, leading to activation of mTORC1 and subsequent inactivation of TFEB and TFE3. Together with FLCN, regulates autophagy: following phosphorylation by ULK1, interacts with GABARAP and promotes autophagy. In addition to its role in mTORC1 signaling, also acts as a co-chaperone of HSP90AA1/Hsp90: following gradual phosphorylation by CK2, inhibits the ATPase activity of HSP90AA1/Hsp90, leading to activate both kinase and non-kinase client proteins of HSP90AA1/Hsp90. Acts as a scaffold to load client protein FLCN onto HSP90AA1/Hsp90. Competes with the activating co-chaperone AHSA1 for binding to HSP90AA1, thereby providing a reciprocal regulatory mechanism for chaperoning of client proteins. Also acts as a core component of the reductive stress response by inhibiting activation of mitochondria in normal conditions: in response to reductive stress, the conserved Cys degron is reduced, leading to recognition and polyubiquitylation by the CRL2(FEM1B) complex, followed by proteasomal. Required for B-cell development. This chain is Folliculin-interacting protein 1, found in Homo sapiens (Human).